Consider the following 332-residue polypeptide: Diaminopimelate epimerase (332 aa).

Substrate-binding residues include N13 and N73. C82 functions as the Proton donor in the catalytic mechanism. Residues 83–84, N172, N209, and 227–228 contribute to the substrate site; these read GN and ER. C236 (proton acceptor) is an active-site residue. 237–238 contributes to the substrate binding site; the sequence is GT.

Belongs to the diaminopimelate epimerase family. In terms of assembly, homodimer.

It localises to the cytoplasm. The enzyme catalyses (2S,6S)-2,6-diaminopimelate = meso-2,6-diaminopimelate. It participates in amino-acid biosynthesis; L-lysine biosynthesis via DAP pathway; DL-2,6-diaminopimelate from LL-2,6-diaminopimelate: step 1/1. Functionally, catalyzes the stereoinversion of LL-2,6-diaminopimelate (L,L-DAP) to meso-diaminopimelate (meso-DAP), a precursor of L-lysine and an essential component of the bacterial peptidoglycan. This Lactiplantibacillus plantarum (strain ATCC BAA-793 / NCIMB 8826 / WCFS1) (Lactobacillus plantarum) protein is Diaminopimelate epimerase.